The sequence spans 116 residues: MRVKTGTVRRRRHKKILKQAKGFYSGRRKHFRKAKEQLERSLVYAYRDRKQKKREFRKLWITRINAACRLNDISYSRFIHGLSKAGIELDRKILADMAMNEPEAFKAVVEKAKAAL.

It belongs to the bacterial ribosomal protein bL20 family.

Binds directly to 23S ribosomal RNA and is necessary for the in vitro assembly process of the 50S ribosomal subunit. It is not involved in the protein synthesizing functions of that subunit. This chain is Large ribosomal subunit protein bL20, found in Nitratiruptor sp. (strain SB155-2).